Consider the following 592-residue polypeptide: NADH-quinone oxidoreductase subunit C/D (592 aa).

An NADH dehydrogenase I subunit C region spans residues 1–183; that stretch reads MLTEFNSIPA…GPYILTEEKE (183 aa). The tract at residues 207-592 is NADH dehydrogenase I subunit D; that stretch reads DFMFLNLGPN…IDFVMADVDR (386 aa).

It in the N-terminal section; belongs to the complex I 30 kDa subunit family. This sequence in the C-terminal section; belongs to the complex I 49 kDa subunit family. NDH-1 is composed of 13 different subunits. Subunits NuoB, CD, E, F, and G constitute the peripheral sector of the complex.

It is found in the cell inner membrane. The enzyme catalyses a quinone + NADH + 5 H(+)(in) = a quinol + NAD(+) + 4 H(+)(out). NDH-1 shuttles electrons from NADH, via FMN and iron-sulfur (Fe-S) centers, to quinones in the respiratory chain. The immediate electron acceptor for the enzyme in this species is believed to be ubiquinone. Couples the redox reaction to proton translocation (for every two electrons transferred, four hydrogen ions are translocated across the cytoplasmic membrane), and thus conserves the redox energy in a proton gradient. This chain is NADH-quinone oxidoreductase subunit C/D, found in Acidiphilium cryptum (strain JF-5).